A 345-amino-acid chain; its full sequence is Phosphate acyltransferase (345 aa).

The protein belongs to the PlsX family. In terms of assembly, homodimer. Probably interacts with PlsY.

It is found in the cytoplasm. It catalyses the reaction a fatty acyl-[ACP] + phosphate = an acyl phosphate + holo-[ACP]. The protein operates within lipid metabolism; phospholipid metabolism. Its function is as follows. Catalyzes the reversible formation of acyl-phosphate (acyl-PO(4)) from acyl-[acyl-carrier-protein] (acyl-ACP). This enzyme utilizes acyl-ACP as fatty acyl donor, but not acyl-CoA. This Wolbachia sp. subsp. Drosophila simulans (strain wRi) protein is Phosphate acyltransferase.